Here is a 337-residue protein sequence, read N- to C-terminus: Ketol-acid reductoisomerase (NADP(+)) (337 aa).

Positions 3–183 constitute a KARI N-terminal Rossmann domain; sequence VEMFYDADAD…GGARAGVIKT (181 aa). Residues 26–29, K49, S52, S54, and 84–87 contribute to the NADP(+) site; these read YGSQ and DTAQ. The active site involves H109. G135 is a binding site for NADP(+). Residues 184–329 enclose the KARI C-terminal knotted domain; that stretch reads TFKDETETDL…KKLRDLMSWV (146 aa). The Mg(2+) site is built by D192, E196, E228, and E232. S253 lines the substrate pocket.

Belongs to the ketol-acid reductoisomerase family. Requires Mg(2+) as cofactor.

The enzyme catalyses (2R)-2,3-dihydroxy-3-methylbutanoate + NADP(+) = (2S)-2-acetolactate + NADPH + H(+). It catalyses the reaction (2R,3R)-2,3-dihydroxy-3-methylpentanoate + NADP(+) = (S)-2-ethyl-2-hydroxy-3-oxobutanoate + NADPH + H(+). It functions in the pathway amino-acid biosynthesis; L-isoleucine biosynthesis; L-isoleucine from 2-oxobutanoate: step 2/4. It participates in amino-acid biosynthesis; L-valine biosynthesis; L-valine from pyruvate: step 2/4. Functionally, involved in the biosynthesis of branched-chain amino acids (BCAA). Catalyzes an alkyl-migration followed by a ketol-acid reduction of (S)-2-acetolactate (S2AL) to yield (R)-2,3-dihydroxy-isovalerate. In the isomerase reaction, S2AL is rearranged via a Mg-dependent methyl migration to produce 3-hydroxy-3-methyl-2-ketobutyrate (HMKB). In the reductase reaction, this 2-ketoacid undergoes a metal-dependent reduction by NADPH to yield (R)-2,3-dihydroxy-isovalerate. The sequence is that of Ketol-acid reductoisomerase (NADP(+)) from Mycolicibacterium gilvum (strain PYR-GCK) (Mycobacterium gilvum (strain PYR-GCK)).